A 307-amino-acid polypeptide reads, in one-letter code: 4-diphosphocytidyl-2-C-methyl-D-erythritol kinase (307 aa).

Residue lysine 14 is part of the active site. An ATP-binding site is contributed by 107 to 117 (PVAGGMAGGSA). Residue aspartate 149 is part of the active site.

It belongs to the GHMP kinase family. IspE subfamily.

It catalyses the reaction 4-CDP-2-C-methyl-D-erythritol + ATP = 4-CDP-2-C-methyl-D-erythritol 2-phosphate + ADP + H(+). It participates in isoprenoid biosynthesis; isopentenyl diphosphate biosynthesis via DXP pathway; isopentenyl diphosphate from 1-deoxy-D-xylulose 5-phosphate: step 3/6. Functionally, catalyzes the phosphorylation of the position 2 hydroxy group of 4-diphosphocytidyl-2C-methyl-D-erythritol. The polypeptide is 4-diphosphocytidyl-2-C-methyl-D-erythritol kinase (Thermobifida fusca (strain YX)).